Reading from the N-terminus, the 138-residue chain is Cysteine desulfuration protein SufE (138 aa).

Cys-51 serves as the catalytic Cysteine persulfide intermediate.

This sequence belongs to the SufE family. Homodimer. Interacts with SufS.

Its subcellular location is the cytoplasm. It functions in the pathway cofactor biosynthesis; iron-sulfur cluster biosynthesis. Participates in cysteine desulfuration mediated by SufS. Cysteine desulfuration mobilizes sulfur from L-cysteine to yield L-alanine and constitutes an essential step in sulfur metabolism for biosynthesis of a variety of sulfur-containing biomolecules. Functions as a sulfur acceptor for SufS, by mediating the direct transfer of the sulfur atom from the S-sulfanylcysteine of SufS, an intermediate product of cysteine desulfuration process. This Salmonella agona (strain SL483) protein is Cysteine desulfuration protein SufE.